The following is a 431-amino-acid chain: Divalent metal cation transporter MntH (431 aa).

The next 12 membrane-spanning stretches (helical) occupy residues Trp30–Gly50, Gly63–Leu83, Pro106–Glu126, Leu137–Leu159, Ile169–Ser189, Tyr209–Leu229, Val257–Ala277, Val287–Ser307, Val309–Gly329, Ile341–Gly361, Ala367–Leu387, and Val405–Phe425.

This sequence belongs to the NRAMP family.

It is found in the cell inner membrane. Its function is as follows. H(+)-stimulated, divalent metal cation uptake system. This Chromohalobacter salexigens (strain ATCC BAA-138 / DSM 3043 / CIP 106854 / NCIMB 13768 / 1H11) protein is Divalent metal cation transporter MntH.